Here is a 310-residue protein sequence, read N- to C-terminus: Proline iminopeptidase (310 aa).

Positions 41–288 (LVTLHGGPGG…NSSHMAMWEE (248 aa)) constitute an AB hydrolase-1 domain. Serine 116 (nucleophile) is an active-site residue. Aspartate 255 is an active-site residue. Catalysis depends on histidine 282, which acts as the Proton donor.

It belongs to the peptidase S33 family. As to quaternary structure, part of the tricorn proteolytic complex.

The catalysed reaction is Release of N-terminal proline from a peptide.. Functionally, cleaves H-Pro-AMC as well as a wide spectrum of amino acid substrates and several peptide substrates without a proline at the N-terminus. In conjunction with the three factors F1, F2 and F3, Tricorn degrades oligopeptides in a sequential manner, yielding free amino acids. In Saccharolobus solfataricus (strain ATCC 35092 / DSM 1617 / JCM 11322 / P2) (Sulfolobus solfataricus), this protein is Proline iminopeptidase (pip).